Reading from the N-terminus, the 100-residue chain is NADH-quinone oxidoreductase subunit K (100 aa).

3 helical membrane passes run Leu4–Ile24, Leu28–Val48, and Val60–Leu80.

This sequence belongs to the complex I subunit 4L family. As to quaternary structure, NDH-1 is composed of 13 different subunits. Subunits NuoA, H, J, K, L, M, N constitute the membrane sector of the complex.

Its subcellular location is the cell inner membrane. The catalysed reaction is a quinone + NADH + 5 H(+)(in) = a quinol + NAD(+) + 4 H(+)(out). Its function is as follows. NDH-1 shuttles electrons from NADH, via FMN and iron-sulfur (Fe-S) centers, to quinones in the respiratory chain. The immediate electron acceptor for the enzyme in this species is believed to be ubiquinone. Couples the redox reaction to proton translocation (for every two electrons transferred, four hydrogen ions are translocated across the cytoplasmic membrane), and thus conserves the redox energy in a proton gradient. This chain is NADH-quinone oxidoreductase subunit K, found in Yersinia enterocolitica serotype O:8 / biotype 1B (strain NCTC 13174 / 8081).